Reading from the N-terminus, the 334-residue chain is Mediator of RNA polymerase II transcription subunit 4 (334 aa).

Positions 76 to 100 (LIRTLKAHVEKRDEVIQQVENNLKA) form a coiled coil. The segment covering 188 to 203 (SSAQKPIIASPSASSS) has biased composition (low complexity). Disordered regions lie at residues 188–234 (SSAQ…GYGA) and 252–334 (EKQW…GRNK). Polar residues-rich tracts occupy residues 204–225 (NGGT…TNGD) and 264–282 (ATSS…SSPS).

The protein belongs to the Mediator complex subunit 4 family. In terms of assembly, component of the Mediator complex.

Its subcellular location is the nucleus. Functionally, component of the Mediator complex, a coactivator involved in the regulated transcription of nearly all RNA polymerase II-dependent genes. Mediator functions as a bridge to convey information from gene-specific regulatory proteins to the basal RNA polymerase II transcription machinery. Mediator is recruited to promoters by direct interactions with regulatory proteins and serves as a scaffold for the assembly of a functional preinitiation complex with RNA polymerase II and the general transcription factors. This is Mediator of RNA polymerase II transcription subunit 4 (mdt-4) from Caenorhabditis briggsae.